A 426-amino-acid polypeptide reads, in one-letter code: MENMFRLMDQDQDLTNNRCIWVNGPVIVGAGPSGLATAACLHEQNVPFVVLERADCIASLWQKRTYDRLKLHLPKQFCQLPKMPFPEDFPEYPTKRQFIDYLESYATRFEINPKFNECVQTARFDETSGLWRVKTVSKSESTQTEVEYICRWLVVATGENAERVMPEIDGLSEFSGEVIHACDYKSGEKFAGKKVLVVGCGNSGMEVSLDLANHFAKPSMVVRSSLHVMPREVMGKSTFELAMKMLRWFPLWLVDKILLVLSWMVLGNIEKYGLKRPEMGPMELKSVKGKTPVLDIGAIEKIRLGKINVVPGIKRFNGNKVELVNGEQLDVDSVVLATGYRSNVPYWLQENEFFAKNGFPKTVADNNGWKGRTGLYAVGFTRKGLSGASMDAVKIAQDIGSVWQLETKQPTKRSRGSLRRCISQQF.

Position 29–34 (29–34 (GAGPSG)) interacts with FAD. Residue 199-204 (GCGNSG) participates in NADP(+) binding.

This sequence belongs to the FMO family. It depends on FAD as a cofactor. In terms of tissue distribution, expressed in root tips and in hydathodes. Expressed in root vasculature and quiescent center, but not in the meristematic zone of the root tip.

The catalysed reaction is indole-3-pyruvate + NADPH + O2 + H(+) = (indol-3-yl)acetate + CO2 + NADP(+) + H2O. It participates in plant hormone metabolism; auxin biosynthesis. Involved in auxin biosynthesis. Belongs to the set of redundant YUCCA genes probably responsible for auxin biosynthesis in roots. The polypeptide is Probable indole-3-pyruvate monooxygenase YUCCA8 (YUC8) (Arabidopsis thaliana (Mouse-ear cress)).